A 98-amino-acid polypeptide reads, in one-letter code: Homeobox protein SMOX-4 (98 aa).

The homeobox DNA-binding region spans 37 to 96 (SFRNRTAFTDYQLICLEREFSHIQYLSRIDRIHLAQNLNLTEKQVKIWFQNRRVRWRKRN).

It localises to the nucleus. This is Homeobox protein SMOX-4 (SMOX-4) from Schistosoma mansoni (Blood fluke).